A 120-amino-acid polypeptide reads, in one-letter code: Large ribosomal subunit protein uL18c (120 aa).

The protein belongs to the universal ribosomal protein uL18 family. As to quaternary structure, part of the 50S ribosomal subunit; contacts the 5S rRNA.

It is found in the plastid. The protein localises to the chloroplast. In terms of biological role, binds 5S rRNA, forms part of the central protuberance of the 50S subunit. The polypeptide is Large ribosomal subunit protein uL18c (rpl18) (Porphyra purpurea (Red seaweed)).